A 111-amino-acid chain; its full sequence is Tubulin beta chain (111 aa).

Positions 82-111 are disordered; that stretch reads SEYQQYQDATAEDEGEFDEEEAEGEGQEYA. A compositionally biased stretch (acidic residues) spans 91–111; the sequence is TAEDEGEFDEEEAEGEGQEYA.

This sequence belongs to the tubulin family. In terms of assembly, dimer of alpha and beta chains. A typical microtubule is a hollow water-filled tube with an outer diameter of 25 nm and an inner diameter of 15 nM. Alpha-beta heterodimers associate head-to-tail to form protofilaments running lengthwise along the microtubule wall with the beta-tubulin subunit facing the microtubule plus end conferring a structural polarity. Microtubules usually have 13 protofilaments but different protofilament numbers can be found in some organisms and specialized cells. Requires Mg(2+) as cofactor.

It localises to the cytoplasm. It is found in the cytoskeleton. Functionally, tubulin is the major constituent of microtubules, a cylinder consisting of laterally associated linear protofilaments composed of alpha- and beta-tubulin heterodimers. Microtubules grow by the addition of GTP-tubulin dimers to the microtubule end, where a stabilizing cap forms. Below the cap, tubulin dimers are in GDP-bound state, owing to GTPase activity of alpha-tubulin. This is Tubulin beta chain from Lymnaea stagnalis (Great pond snail).